Here is a 615-residue protein sequence, read N- to C-terminus: Integral inner nuclear membrane protein ima1 (615 aa).

3 helical membrane-spanning segments follow: residues 192–212, 247–267, and 323–343; these read FVLW…SIVW, IFYF…WYKM, and QIHA…ISCL. Residues 357-387 are disordered; that stretch reads ILKPRKKRQESTSSVHRIGKESSDRKDGISG. Positions 374-384 are enriched in basic and acidic residues; the sequence is IGKESSDRKDG. Helical transmembrane passes span 563-583 and 586-606; these read AKLL…GWRL and FTMF…VMKH.

The protein localises to the nucleus inner membrane. Functionally, inner nuclear membrane protein that specifically binds to heterochromatic regions and promotes the tethering of centromeric DNA to the SUN-KASH complex. Couples centromeres to the nuclear envelope, thus contributing to their association with the microtubule organizing center attachment site and to the positioning of the nucleus at the cell center by microtubules. The polypeptide is Integral inner nuclear membrane protein ima1 (IMA1) (Schizosaccharomyces pombe (strain 972 / ATCC 24843) (Fission yeast)).